Consider the following 432-residue polypeptide: Endosome-associated-trafficking regulator 1 (432 aa).

Ser-18 carries the phosphoserine modification. The segment covering Asp-126 to Gly-143 has biased composition (basic and acidic residues). The segment at Asp-126–Glu-145 is disordered. Ser-148 is modified (phosphoserine). The tract at residues Leu-174 to Ser-196 is required for interaction with PTPN13. The segment at Pro-226–Phe-250 is disordered. Phosphoserine occurs at positions 241 and 245. Coiled-coil stretches lie at residues Leu-262–Phe-289 and Phe-315–Gly-370.

It belongs to the ENTR1 family. In terms of assembly, found in a complex with ENTR1, PTPN13 and GIT1. Interacts with PTPN13 (via the FERM domain). Interacts (via N-terminus) with GIT1 (via N- and C-terminus); this interaction is direct. Interacts with NOD2. Interacts (via N-terminus) with IFT88. Interacts with VPS35. In terms of processing, phosphorylated.

It localises to the cytoplasm. It is found in the early endosome. The protein localises to the endosome. Its subcellular location is the recycling endosome. The protein resides in the midbody. It localises to the cytoskeleton. It is found in the microtubule organizing center. The protein localises to the centrosome. Its subcellular location is the cilium basal body. In terms of biological role, may be involved in modulation of TNF response. May be involved in presentation of TNFRSF1A on the cell surface. Involved in the endosome-to-plasma membrane trafficking and recycling of SNX27-retromer-dependent cargo proteins, such as GLUT1. Involved in the regulation of cytokinesis; the function may involve PTPN13 and GIT1. Functionally, endosome-associated protein that plays a role in membrane receptor sorting, cytokinesis and ciliogenesis. Involved in the endosome-to-plasma membrane trafficking and recycling of SNX27-retromer-dependent cargo proteins, such as GLUT1. Involved in the regulation of cytokinesis; the function may involve PTPN13 and GIT1. Plays a role in the formation of cilia. Involved in cargo protein localization, such as PKD2, at primary cilia. Involved in the presentation of the tumor necrosis factor (TNF) receptor TNFRSF1A on the cell surface, and hence in the modulation of the TNF-induced apoptosis. The protein is Endosome-associated-trafficking regulator 1 of Mus musculus (Mouse).